A 287-amino-acid chain; its full sequence is Probable phosphite transport system-binding protein PtxB (287 aa).

Residues 1-23 (MKRLSALLLTCLLSAVSSLSALA) form the signal peptide.

The protein belongs to the phosphate/phosphite/phosphonate binding protein family.

In terms of biological role, probably forms part of a binding-protein-dependent phosphite transporter. Required for oxidation of phosphite to phosphate. The sequence is that of Probable phosphite transport system-binding protein PtxB (ptxB) from Stutzerimonas stutzeri (Pseudomonas stutzeri).